We begin with the raw amino-acid sequence, 156 residues long: 17.7 kDa class II heat shock protein (156 aa).

A sHSP domain is found at 39–156 (DAKAMAATPA…KPKTIQVQVA (118 aa)).

It belongs to the small heat shock protein (HSP20) family. May form oligomeric structures.

The protein resides in the cytoplasm. The polypeptide is 17.7 kDa class II heat shock protein (HSP17.7) (Arabidopsis thaliana (Mouse-ear cress)).